A 148-amino-acid chain; its full sequence is Probable transcriptional regulator SyrB (148 aa).

The tract at residues 1 to 58 (MADESNTGPVAAAEAVAETQAPAGKRKSSSRRQRTAAGQVAESKTTAKPKRYSETERA) is disordered. The span at 7–23 (TGPVAAAEAVAETQAPA) shows a compositional bias: low complexity. Positions 24–34 (GKRKSSSRRQR) are enriched in basic residues.

This sequence belongs to the SyrB family.

In terms of biological role, responsible for the repression of SyrM activity. The polypeptide is Probable transcriptional regulator SyrB (syrB) (Sinorhizobium fredii (strain NBRC 101917 / NGR234)).